The chain runs to 527 residues: MQKERVIMTNISTLNDVQKIIVLDYGSQYNQLIARRIREFGVFSELKSHKITADEVRAINPIGIILSGGPNSVYAEDAFGIDEEIFELGIPILGICYGMQLLTHKLGGKVVPAGEAGNREYGQSTLRLRAQSELFAGTPEEQVVLMSHGDAVTEIPEGFHLVADSVDCPFAAMEDTKKNFYGIQFHPEVRHTVYGNDILKNFAFSICGAKGDWSMANFVDMQIAQIRETVGDRKVLLGLSGGVDSSVVGVLLQKAIGDQLTCIFVDHGLLRKGEGDQVMEMLGGKFGLNIIRVDASKRFLDLLAGVDDPDKKRKIIGNEFVHVFDDEASKLKGVDFLAQGTLYTDIIESGTETAQTIKSHHNVGGLPEDMQFELIEPLNTLFKDEVRALGTELGMPDEVVWRQPFPGPGLAIRIMGEITEEKLETVRESDAILREEIAKAGLDRDVWQYFTVNTGVRSVGVMGDGRTYDYTIAIRAITSIDGMTADFAKLPWEVLQKISVRIVNEVDHVNRIVYDITSKPPATVEWE.

A Glutamine amidotransferase type-1 domain is found at 19-212 (KIIVLDYGSQ…AFSICGAKGD (194 aa)). Cys-96 serves as the catalytic Nucleophile. Catalysis depends on residues His-186 and Glu-188. In terms of domain architecture, GMPS ATP-PPase spans 213-402 (WSMANFVDMQ…LGMPDEVVWR (190 aa)). ATP is bound at residue 240 to 246 (SGGVDSS).

Homodimer.

The catalysed reaction is XMP + L-glutamine + ATP + H2O = GMP + L-glutamate + AMP + diphosphate + 2 H(+). It participates in purine metabolism; GMP biosynthesis; GMP from XMP (L-Gln route): step 1/1. In terms of biological role, catalyzes the synthesis of GMP from XMP. The sequence is that of GMP synthase [glutamine-hydrolyzing] from Streptococcus thermophilus (strain CNRZ 1066).